A 174-amino-acid polypeptide reads, in one-letter code: MSLAKSAANKLDWAKVISSLRITGSTATQLSSFKKRNDEARRQLLELQSQPTEVDFSHYRSVLKNTSVIDKIESYVKQYKPVKIDASKQLQVIESFEKHAMTNAKETESLVSKELKDLQSTLDNIQSARPFDELTVDDLTKIKPEIDAKVEEMVKKGKWDVPGYKDRFGNLNVM.

The residue at position 2 (Ser2) is an N-acetylserine.

It belongs to the ATPase d subunit family. In terms of assembly, F-type ATPases have 2 components, CF(1) - the catalytic core - and CF(0) - the membrane proton channel. In yeast, the dimeric form of ATP synthase consists of 17 polypeptides: alpha, beta, gamma, delta, epsilon, 4 (B), 5 (OSCP), 6 (A), 8, 9 (C), d, E (Tim11), f, g, h, i/j and k.

It is found in the mitochondrion. The protein resides in the mitochondrion inner membrane. Mitochondrial membrane ATP synthase (F(1)F(0) ATP synthase or Complex V) produces ATP from ADP in the presence of a proton gradient across the membrane which is generated by electron transport complexes of the respiratory chain. F-type ATPases consist of two structural domains, F(1) - containing the extramembraneous catalytic core, and F(0) - containing the membrane proton channel, linked together by a central stalk and a peripheral stalk. During catalysis, ATP synthesis in the catalytic domain of F(1) is coupled via a rotary mechanism of the central stalk subunits to proton translocation. Part of the complex F(0) domain and the peripheric stalk, which acts as a stator to hold the catalytic alpha(3)beta(3) subcomplex and subunit a/ATP6 static relative to the rotary elements. This chain is ATP synthase subunit d, mitochondrial (ATP7), found in Saccharomyces cerevisiae (strain ATCC 204508 / S288c) (Baker's yeast).